We begin with the raw amino-acid sequence, 116 residues long: Large ribosomal subunit protein uL18 (116 aa).

It belongs to the universal ribosomal protein uL18 family. In terms of assembly, part of the 50S ribosomal subunit; part of the 5S rRNA/L5/L18/L25 subcomplex. Contacts the 5S and 23S rRNAs.

In terms of biological role, this is one of the proteins that bind and probably mediate the attachment of the 5S RNA into the large ribosomal subunit, where it forms part of the central protuberance. In Pseudomonas aeruginosa (strain UCBPP-PA14), this protein is Large ribosomal subunit protein uL18.